Consider the following 352-residue polypeptide: Beta-methylmalyl-CoA dehydratase (352 aa).

The MaoC-like domain maps to 16–129 (LGQTIVHATP…GKTGVVYVHS (114 aa)). Substrate-binding positions include 62–65 (PIDS), 85–88 (IANL), and 96–98 (GAV).

Homodimer.

It carries out the reaction (2R,3S)-beta-methylmalyl-CoA = 2-methylfumaryl-CoA + H2O. Involved in the glyoxylate assimilation cycle used to regenerate acetyl-CoA and produce pyruvate as universal precursor for biosynthesis. Catalyzes the reversible dehydration of beta-methylmalyl-CoA ((2R,3S)-beta-methylmalyl-CoA) to yield mesaconyl-CoA (2-methylfumaryl-CoA). This chain is Beta-methylmalyl-CoA dehydratase (mch), found in Chloroflexus aurantiacus (strain ATCC 29366 / DSM 635 / J-10-fl).